We begin with the raw amino-acid sequence, 301 residues long: MDAFENMSVSNHPGGNARRNSQSANEMLASQIQDFQNIPRSFNDSNANVNLSKNCTVGNQLPFSSRQQKIIMEHLLITKNNSQQQKDYSHVPCKFFKMGNCQAGSSCPFSHSPDIISSANNLPCKYFAKGNCKFGNKCVNAHVLPNGFKMNSKEPIDITPPSQNNYLSHARSASFSTYTSPPLSAQTEFSHSASNANYFSSQYLMYSPQKSPEALYTEFFSPPSSSSSYINYSYNNSNINAYSPVSSSSSNIWQEQGQTTLSNPSVNQNLRYRTGPAIQEESDNEIEDLLIHNFNSRYCHE.

The tract at residues Met-1–Asn-25 is disordered. A compositionally biased stretch (polar residues) spans Met-7 to Asn-25. Phosphoserine is present on residues Ser-21 and Ser-30. 2 consecutive C3H1-type zinc fingers follow at residues Asp-87–Asp-114 and Pro-123–Pro-145. Phosphoserine is present on Ser-282.

The polypeptide is Zinc finger protein LEE1 (LEE1) (Saccharomyces cerevisiae (strain ATCC 204508 / S288c) (Baker's yeast)).